The chain runs to 207 residues: Nuclear transcription factor Y subunit beta (207 aa).

Residues 1–52 form an a domain region; that stretch reads MTMDGDSSTTDASQLGISADYIGGSHYVIQPHDDTEDSMNDHEDTNGSKESF. Residues 27–52 form a disordered region; it reads YVIQPHDDTEDSMNDHEDTNGSKESF. Residues 39–52 are compositionally biased toward basic and acidic residues; sequence MNDHEDTNGSKESF. Residues 53-142 form a b domain region; the sequence is REQDIYLPIA…PLKLYLQKFR (90 aa). Residues 59-65 mediate DNA binding; sequence LPIANVA. Residues 86 to 97 are subunit association domain (SAD); sequence VQECVSEFISFI. Lys-140 is covalently cross-linked (Glycyl lysine isopeptide (Lys-Gly) (interchain with G-Cter in ubiquitin)). The c domain stretch occupies residues 143-207; the sequence is EAMKGEKGIG…ISGVQQIQFS (65 aa).

This sequence belongs to the NFYB/HAP3 subunit family. In terms of assembly, heterotrimeric transcription factor composed of three components, NF-YA, NF-YB and NF-YC. NF-YB and NF-YC must interact and dimerize for NF-YA association and DNA binding. Interacts with C1QBP. Monoubiquitination at Lys-140 plays an important role in transcriptional activation by allowing the deposition of histone H3 methylations as well as histone H2B monoubiquitination at 'Lys-121'.

The protein resides in the nucleus. Functionally, component of the sequence-specific heterotrimeric transcription factor (NF-Y) which specifically recognizes a 5'-CCAAT-3' box motif found in the promoters of its target genes. NF-Y can function as both an activator and a repressor, depending on its interacting cofactors. The polypeptide is Nuclear transcription factor Y subunit beta (NFYB) (Homo sapiens (Human)).